The primary structure comprises 456 residues: Exodeoxyribonuclease 7 large subunit (456 aa).

This sequence belongs to the XseA family. Heterooligomer composed of large and small subunits.

The protein localises to the cytoplasm. It catalyses the reaction Exonucleolytic cleavage in either 5'- to 3'- or 3'- to 5'-direction to yield nucleoside 5'-phosphates.. Bidirectionally degrades single-stranded DNA into large acid-insoluble oligonucleotides, which are then degraded further into small acid-soluble oligonucleotides. The chain is Exodeoxyribonuclease 7 large subunit from Escherichia coli (strain SE11).